A 137-amino-acid chain; its full sequence is Large ribosomal subunit protein uL16 (137 aa).

This sequence belongs to the universal ribosomal protein uL16 family. Part of the 50S ribosomal subunit.

Its function is as follows. Binds 23S rRNA and is also seen to make contacts with the A and possibly P site tRNAs. This is Large ribosomal subunit protein uL16 from Nitratidesulfovibrio vulgaris (strain ATCC 29579 / DSM 644 / CCUG 34227 / NCIMB 8303 / VKM B-1760 / Hildenborough) (Desulfovibrio vulgaris).